The primary structure comprises 118 residues: uncharacterized protein (118 aa).

This is an uncharacterized protein from Escherichia coli (strain UTI89 / UPEC).